Reading from the N-terminus, the 240-residue chain is UDP-2,3-diacylglucosamine hydrolase (240 aa).

Mn(2+) is bound by residues aspartate 8, histidine 10, aspartate 41, asparagine 78, and histidine 113. 78–79 is a binding site for substrate; it reads NR. Positions 121, 159, 163, 166, and 194 each coordinate substrate. Histidine 194 and histidine 196 together coordinate Mn(2+).

The protein belongs to the LpxH family. It depends on Mn(2+) as a cofactor.

Its subcellular location is the cell inner membrane. The catalysed reaction is UDP-2-N,3-O-bis[(3R)-3-hydroxytetradecanoyl]-alpha-D-glucosamine + H2O = 2-N,3-O-bis[(3R)-3-hydroxytetradecanoyl]-alpha-D-glucosaminyl 1-phosphate + UMP + 2 H(+). It participates in glycolipid biosynthesis; lipid IV(A) biosynthesis; lipid IV(A) from (3R)-3-hydroxytetradecanoyl-[acyl-carrier-protein] and UDP-N-acetyl-alpha-D-glucosamine: step 4/6. Hydrolyzes the pyrophosphate bond of UDP-2,3-diacylglucosamine to yield 2,3-diacylglucosamine 1-phosphate (lipid X) and UMP by catalyzing the attack of water at the alpha-P atom. Involved in the biosynthesis of lipid A, a phosphorylated glycolipid that anchors the lipopolysaccharide to the outer membrane of the cell. This is UDP-2,3-diacylglucosamine hydrolase from Shewanella baltica (strain OS195).